We begin with the raw amino-acid sequence, 389 residues long: MGRAARWFKGIFGMKKSKEKENCVSGDVGGEAGGSNIHRKVLQADSVWLRTYLAETDKEQNKHAIAVAAATAAAADAAVAAAQAAVAVVRLTSNGRSGGYSGNAMERWAAVKIQSVFKGYLARKALRALKGLVKLQALVRGYLVRKRAAETLHSMQALIRAQTSVRSQRINRNNMFHPRHSLERLDDSRSEIHSKRISISVEKQSNHNNNAYDETSPKIVEIDTYKTKSRSKRMNVAVSECGDDFIYQAKDFEWSFPGEKCKFPTAQNTPRFSSSMANNNYYYTPPSPAKSVCRDACFRPSYPGLMTPSYMANTQSFKAKVRSHSAPRQRPDRKRLSLDEIMAARSSVSGVRMVQPQPQPQTQTQQQKRSPCSYDHQFRQNETDFRFYN.

IQ domains are found at residues 106–134 and 135–157; these read ERWA…GLVK and LQAL…SMQA. The tract at residues 137–151 is calmodulin-binding; it reads ALVRGYLVRKRAAET. The tract at residues 347–374 is disordered; the sequence is SVSGVRMVQPQPQPQTQTQQQKRSPCSY.

It belongs to the IQD family. Binds to multiple calmodulin (CaM) in the presence of Ca(2+) and CaM-like proteins.

The protein resides in the cell membrane. It is found in the cytoplasm. The protein localises to the cytoskeleton. In terms of biological role, may be involved in cooperative interactions with calmodulins or calmodulin-like proteins. Recruits calmodulin proteins to microtubules, thus being a potential scaffold in cellular signaling and trafficking. May associate with nucleic acids and regulate gene expression at the transcriptional or post-transcriptional level. The chain is Protein IQ-domain 26 from Arabidopsis thaliana (Mouse-ear cress).